The chain runs to 338 residues: CRISPR-associated endonuclease Cas1 (338 aa).

Positions 165, 230, and 245 each coordinate Mn(2+).

Belongs to the CRISPR-associated endonuclease Cas1 family. As to quaternary structure, homodimer, forms a heterotetramer with a Cas2 homodimer. Mg(2+) is required as a cofactor. Mn(2+) serves as cofactor.

Functionally, CRISPR (clustered regularly interspaced short palindromic repeat), is an adaptive immune system that provides protection against mobile genetic elements (viruses, transposable elements and conjugative plasmids). CRISPR clusters contain spacers, sequences complementary to antecedent mobile elements, and target invading nucleic acids. CRISPR clusters are transcribed and processed into CRISPR RNA (crRNA). Acts as a dsDNA endonuclease. Involved in the integration of spacer DNA into the CRISPR cassette. The sequence is that of CRISPR-associated endonuclease Cas1 from Fusobacterium nucleatum subsp. nucleatum (strain ATCC 25586 / DSM 15643 / BCRC 10681 / CIP 101130 / JCM 8532 / KCTC 2640 / LMG 13131 / VPI 4355).